The chain runs to 141 residues: Large ribosomal subunit protein uL11 (141 aa).

Belongs to the universal ribosomal protein uL11 family. Part of the ribosomal stalk of the 50S ribosomal subunit. Interacts with L10 and the large rRNA to form the base of the stalk. L10 forms an elongated spine to which L12 dimers bind in a sequential fashion forming a multimeric L10(L12)X complex. Post-translationally, one or more lysine residues are methylated.

Forms part of the ribosomal stalk which helps the ribosome interact with GTP-bound translation factors. The polypeptide is Large ribosomal subunit protein uL11 (Levilactobacillus brevis (strain ATCC 367 / BCRC 12310 / CIP 105137 / JCM 1170 / LMG 11437 / NCIMB 947 / NCTC 947) (Lactobacillus brevis)).